A 481-amino-acid chain; its full sequence is Cobyric acid synthase (481 aa).

The GATase cobBQ-type domain maps to 248–435 (ALTVAWLAFS…LHGMFGSDRF (188 aa)). The Nucleophile role is filled by cysteine 330. Histidine 427 is a catalytic residue.

The protein belongs to the CobB/CobQ family. CobQ subfamily.

It functions in the pathway cofactor biosynthesis; adenosylcobalamin biosynthesis. In terms of biological role, catalyzes amidations at positions B, D, E, and G on adenosylcobyrinic A,C-diamide. NH(2) groups are provided by glutamine, and one molecule of ATP is hydrogenolyzed for each amidation. The sequence is that of Cobyric acid synthase from Cereibacter sphaeroides (strain ATCC 17025 / ATH 2.4.3) (Rhodobacter sphaeroides).